We begin with the raw amino-acid sequence, 338 residues long: Glyceraldehyde-3-phosphate dehydrogenase (338 aa).

Residues Thr11–Ile12 and Gly111 contribute to the NAD(+) site. Ser140–Asn142 provides a ligand contact to D-glyceraldehyde 3-phosphate. The Nucleophile role is filled by Cys141. Arg169 serves as a coordination point for NAD(+). Residue His195 to Gly196 coordinates D-glyceraldehyde 3-phosphate. Gln302 provides a ligand contact to NAD(+).

Belongs to the glyceraldehyde-3-phosphate dehydrogenase family. Homotetramer.

Its subcellular location is the cytoplasm. The enzyme catalyses D-glyceraldehyde 3-phosphate + phosphate + NADP(+) = (2R)-3-phospho-glyceroyl phosphate + NADPH + H(+). It carries out the reaction D-glyceraldehyde 3-phosphate + phosphate + NAD(+) = (2R)-3-phospho-glyceroyl phosphate + NADH + H(+). The protein operates within carbohydrate degradation; glycolysis; pyruvate from D-glyceraldehyde 3-phosphate: step 1/5. In Methanobacterium formicicum, this protein is Glyceraldehyde-3-phosphate dehydrogenase (gap).